The sequence spans 1024 residues: Error-prone DNA polymerase (1024 aa).

This sequence belongs to the DNA polymerase type-C family. DnaE2 subfamily.

The protein localises to the cytoplasm. The enzyme catalyses DNA(n) + a 2'-deoxyribonucleoside 5'-triphosphate = DNA(n+1) + diphosphate. In terms of biological role, DNA polymerase involved in damage-induced mutagenesis and translesion synthesis (TLS). It is not the major replicative DNA polymerase. The sequence is that of Error-prone DNA polymerase from Pseudomonas paraeruginosa (strain DSM 24068 / PA7) (Pseudomonas aeruginosa (strain PA7)).